We begin with the raw amino-acid sequence, 545 residues long: Chaperonin GroEL (545 aa).

Residues 30–33, lysine 51, 87–91, glycine 415, and aspartate 495 contribute to the ATP site; these read TLGP and DGTTT.

This sequence belongs to the chaperonin (HSP60) family. Forms a cylinder of 14 subunits composed of two heptameric rings stacked back-to-back. Interacts with the co-chaperonin GroES.

It localises to the cytoplasm. It carries out the reaction ATP + H2O + a folded polypeptide = ADP + phosphate + an unfolded polypeptide.. In terms of biological role, together with its co-chaperonin GroES, plays an essential role in assisting protein folding. The GroEL-GroES system forms a nano-cage that allows encapsulation of the non-native substrate proteins and provides a physical environment optimized to promote and accelerate protein folding. The protein is Chaperonin GroEL of Yersinia pestis bv. Antiqua (strain Antiqua).